Reading from the N-terminus, the 472-residue chain is Succinate-semialdehyde dehydrogenase [NADP(+)] (472 aa).

Residues 134-135, 158-161, and 210-211 contribute to the NADP(+) site; these read WN, KHAS, and GS. Glutamate 232 functions as the Proton acceptor in the catalytic mechanism. Residue leucine 233 participates in NADP(+) binding. The Nucleophile role is filled by cysteine 266. Position 363 (glutamate 363) interacts with NADP(+).

The protein belongs to the aldehyde dehydrogenase family.

It carries out the reaction succinate semialdehyde + NADP(+) + H2O = succinate + NADPH + 2 H(+). Catalyzes the NADP(+)-dependent oxidation of succinate semialdehyde to succinate. It is believed to be the main source of succinate semialdehyde dehydrogenase activity in Mycobacterium. The protein is Succinate-semialdehyde dehydrogenase [NADP(+)] (gabD1) of Mycolicibacterium paratuberculosis (strain ATCC BAA-968 / K-10) (Mycobacterium paratuberculosis).